Consider the following 319-residue polypeptide: ATP-dependent 6-phosphofructokinase (319 aa).

ATP is bound at residue Gly-11. 21–25 (RAVVR) is a binding site for ADP. Residues 72-73 (RS) and 102-105 (GDGS) each bind ATP. Asp-103 is a binding site for Mg(2+). 125 to 127 (TID) contacts substrate. The active-site Proton acceptor is Asp-127. ADP is bound at residue Arg-154. Residues Arg-162 and 169–171 (MGR) each bind substrate. ADP contacts are provided by residues 185-187 (GAE), Arg-211, and 213-215 (KKH). Substrate contacts are provided by residues Glu-222, Arg-243, and 249 to 252 (HVQR).

It belongs to the phosphofructokinase type A (PFKA) family. ATP-dependent PFK group I subfamily. Prokaryotic clade 'B1' sub-subfamily. Homotetramer. It depends on Mg(2+) as a cofactor.

The protein resides in the cytoplasm. The enzyme catalyses beta-D-fructose 6-phosphate + ATP = beta-D-fructose 1,6-bisphosphate + ADP + H(+). It functions in the pathway carbohydrate degradation; glycolysis; D-glyceraldehyde 3-phosphate and glycerone phosphate from D-glucose: step 3/4. Its activity is regulated as follows. Allosterically activated by ADP and other diphosphonucleosides, and allosterically inhibited by phosphoenolpyruvate. In terms of biological role, catalyzes the phosphorylation of D-fructose 6-phosphate to fructose 1,6-bisphosphate by ATP, the first committing step of glycolysis. In Natranaerobius thermophilus (strain ATCC BAA-1301 / DSM 18059 / JW/NM-WN-LF), this protein is ATP-dependent 6-phosphofructokinase.